A 298-amino-acid polypeptide reads, in one-letter code: uncharacterized protein (298 aa).

This sequence belongs to the NAD(P)-dependent epimerase/dehydratase family.

This is an uncharacterized protein from Saccharomyces cerevisiae (strain ATCC 204508 / S288c) (Baker's yeast).